A 154-amino-acid chain; its full sequence is Interleukin-2 (154 aa).

Residues 1-20 form the signal peptide; it reads MYRMQLLSCIALSLALVTNS. Threonine 23 carries O-linked (GalNAc...) threonine glycosylation. Cysteines 78 and 126 form a disulfide.

It belongs to the IL-2 family.

The protein resides in the secreted. In terms of biological role, cytokine produced by activated CD4-positive helper T-cells and to a lesser extend activated CD8-positive T-cells and natural killer (NK) cells that plays pivotal roles in the immune response and tolerance. Binds to a receptor complex composed of either the high-affinity trimeric IL-2R (IL2RA/CD25, IL2RB/CD122 and IL2RG/CD132) or the low-affinity dimeric IL-2R (IL2RB and IL2RG). Interaction with the receptor leads to oligomerization and conformation changes in the IL-2R subunits resulting in downstream signaling starting with phosphorylation of JAK1 and JAK3. In turn, JAK1 and JAK3 phosphorylate the receptor to form a docking site leading to the phosphorylation of several substrates including STAT5. This process leads to activation of several pathways including STAT, phosphoinositide-3-kinase/PI3K and mitogen-activated protein kinase/MAPK pathways. Functions as a T-cell growth factor and can increase NK-cell cytolytic activity as well. Promotes strong proliferation of activated B-cells and subsequently immunoglobulin production. Plays a pivotal role in regulating the adaptive immune system by controlling the survival and proliferation of regulatory T-cells, which are required for the maintenance of immune tolerance. Moreover, participates in the differentiation and homeostasis of effector T-cell subsets, including Th1, Th2, Th17 as well as memory CD8-positive T-cells. The chain is Interleukin-2 (IL2) from Cercocebus atys (Sooty mangabey).